The sequence spans 175 residues: Nucleoside triphosphate/diphosphate phosphatase (175 aa).

The Proton donor role is filled by Arg-23. Asn-87, Asp-103, Asp-105, Asp-107, Asp-120, and Glu-123 together coordinate Mg(2+).

Belongs to the Ntdp family. Requires Mg(2+) as cofactor.

The enzyme catalyses a ribonucleoside 5'-triphosphate + H2O = a ribonucleoside 5'-diphosphate + phosphate + H(+). It catalyses the reaction a ribonucleoside 5'-diphosphate + H2O = a ribonucleoside 5'-phosphate + phosphate + H(+). Its function is as follows. Has nucleoside phosphatase activity towards nucleoside triphosphates and nucleoside diphosphates. The sequence is that of Nucleoside triphosphate/diphosphate phosphatase from Listeria monocytogenes serotype 4b (strain CLIP80459).